Consider the following 326-residue polypeptide: tRNA-modifying protein YgfZ (326 aa).

Folate is bound by residues Trp27 and Trp189.

The protein belongs to the tRNA-modifying YgfZ family.

The protein resides in the cytoplasm. Its function is as follows. Folate-binding protein involved in regulating the level of ATP-DnaA and in the modification of some tRNAs. It is probably a key factor in regulatory networks that act via tRNA modification, such as initiation of chromosomal replication. In Salmonella typhimurium (strain LT2 / SGSC1412 / ATCC 700720), this protein is tRNA-modifying protein YgfZ.